The chain runs to 536 residues: Indolin-2-one monooxygenase (536 aa).

A helical membrane pass occupies residues glycine 18–isoleucine 34. Cysteine 480 is a heme binding site.

It belongs to the cytochrome P450 family. The cofactor is heme.

It localises to the membrane. It carries out the reaction indolin-2-one + reduced [NADPH--hemoprotein reductase] + O2 = 3-hydroxyindolin-2-one + oxidized [NADPH--hemoprotein reductase] + H2O + H(+). It functions in the pathway secondary metabolite biosynthesis; 2,4-dihydroxy-1,4-benzoxazin-3-one biosynthesis; 2,4-dihydroxy-1,4-benzoxazin-3-one from indoleglycerol phosphate: step 3/5. Catalyzes the conversion of indolin-2-one to 3-hydroxyindolin-2-one. The chain is Indolin-2-one monooxygenase (CYP71C2) from Zea mays (Maize).